A 170-amino-acid polypeptide reads, in one-letter code: Shikimate kinase (170 aa).

Residue 11–16 coordinates ATP; sequence LSGKST. Ser-15 is a Mg(2+) binding site. Substrate-binding residues include Asp-33, Arg-57, and Gly-79. Residue Arg-119 coordinates ATP. Arg-137 contacts substrate.

This sequence belongs to the shikimate kinase family. As to quaternary structure, monomer. Requires Mg(2+) as cofactor.

It is found in the cytoplasm. It carries out the reaction shikimate + ATP = 3-phosphoshikimate + ADP + H(+). It functions in the pathway metabolic intermediate biosynthesis; chorismate biosynthesis; chorismate from D-erythrose 4-phosphate and phosphoenolpyruvate: step 5/7. Catalyzes the specific phosphorylation of the 3-hydroxyl group of shikimic acid using ATP as a cosubstrate. This chain is Shikimate kinase, found in Clostridium botulinum (strain 657 / Type Ba4).